Reading from the N-terminus, the 430-residue chain is tRNA-2-methylthio-N(6)-dimethylallyladenosine synthase (430 aa).

The MTTase N-terminal domain maps to 1–110 (MKVHIFTYGC…VPDAVLNAKN (110 aa)). [4Fe-4S] cluster is bound by residues C10, C46, C75, C146, C150, and C153. In terms of domain architecture, Radical SAM core spans 132–363 (RSSNHHAWVT…LNLQKTINKE (232 aa)). In terms of domain architecture, TRAM spans 366–427 (KSYLGKEVEV…AGPLYGEIKK (62 aa)).

Belongs to the methylthiotransferase family. MiaB subfamily. In terms of assembly, monomer. [4Fe-4S] cluster is required as a cofactor.

It is found in the cytoplasm. The enzyme catalyses N(6)-dimethylallyladenosine(37) in tRNA + (sulfur carrier)-SH + AH2 + 2 S-adenosyl-L-methionine = 2-methylsulfanyl-N(6)-dimethylallyladenosine(37) in tRNA + (sulfur carrier)-H + 5'-deoxyadenosine + L-methionine + A + S-adenosyl-L-homocysteine + 2 H(+). Catalyzes the methylthiolation of N6-(dimethylallyl)adenosine (i(6)A), leading to the formation of 2-methylthio-N6-(dimethylallyl)adenosine (ms(2)i(6)A) at position 37 in tRNAs that read codons beginning with uridine. The chain is tRNA-2-methylthio-N(6)-dimethylallyladenosine synthase from Fervidobacterium nodosum (strain ATCC 35602 / DSM 5306 / Rt17-B1).